A 338-amino-acid chain; its full sequence is Putative transposase for insertion sequence element IS4SA (338 aa).

This sequence belongs to the transposase 11 family.

The chain is Putative transposase for insertion sequence element IS4SA from Synechocystis sp. (strain ATCC 27184 / PCC 6803 / Kazusa).